Reading from the N-terminus, the 161-residue chain is MPSFDIVSEVDFVEVRNAVDNSARELKTRFDFKNVEASITFDKEIVKITTESDFQLTQLVSILRGNLAKREVDAQSMTQKDTVRTGKAWACNVEFKQGIESDTAKKVVKTIKDAKLKVQASIQGEKVRVTAKKRDDLQAAMALVRNNEELGQPFQFDNFRD.

The protein belongs to the YajQ family.

Functionally, nucleotide-binding protein. The chain is Nucleotide-binding protein PBPRA2024 from Photobacterium profundum (strain SS9).